A 132-amino-acid polypeptide reads, in one-letter code: Replication enhancer protein (132 aa).

It belongs to the geminiviridae replication enhancer protein family. As to quaternary structure, homooligomer. Interacts with the replication-associated protein (REP). Interacts with host proliferating cell nuclear antigen (PCNA). Interacts with host retinoblastoma-related protein 1 (RBR1), and may thereby deregulate the host cell cycle. Oligomerization and interaction with PCNA are necessary for optimal replication enhancement.

Its function is as follows. Increases viral DNA accumulation. Enhances infectivity and symptom expression. The sequence is that of Replication enhancer protein from Pepper huasteco yellow vein virus (PHYVV).